A 505-amino-acid chain; its full sequence is Lysine--tRNA ligase (505 aa).

Residues Glu-415 and Glu-422 each coordinate Mg(2+).

It belongs to the class-II aminoacyl-tRNA synthetase family. As to quaternary structure, homodimer. It depends on Mg(2+) as a cofactor.

The protein resides in the cytoplasm. It catalyses the reaction tRNA(Lys) + L-lysine + ATP = L-lysyl-tRNA(Lys) + AMP + diphosphate. This chain is Lysine--tRNA ligase, found in Citrobacter koseri (strain ATCC BAA-895 / CDC 4225-83 / SGSC4696).